Here is a 184-residue protein sequence, read N- to C-terminus: Dynactin subunit 6 (184 aa).

Belongs to the dynactin subunits 5/6 family. Dynactin subunit 6 subfamily. Subunit of dynactin, a multiprotein complex part of a tripartite complex with dynein and a adapter, such as BICDL1, BICD2 or HOOK3. The dynactin complex is built around ACTR1A/ACTB filament and consists of an actin-related filament composed of a shoulder domain, a pointed end and a barbed end.

It is found in the cytoplasm. The protein localises to the cytoskeleton. Its function is as follows. Part of the dynactin complex that activates the molecular motor dynein for ultra-processive transport along microtubules. The sequence is that of Dynactin subunit 6 (dctn6) from Nematostella vectensis (Starlet sea anemone).